The following is a 623-amino-acid chain: MLNDVVRDAEGEKVFLLGNEAIARGAIEAGIDVFAAYPGTPSSEIADTLSDACRLLRGKMDFYMEYSANEKVAFEVAVGASLAGKRAMATMKHVGVNVAADPLFSFAYVGARGGFVLVTADDPSMHSSQNEQDNRWYGKAAKLPVVEPSSVQEAKDYAKLCFDLSEKFGLPMILRSYTRLSHASGVVELGKIPEKEFSRVEWERHPETDVVLPAHARKLKPILLEKLEKIERYFNSSEMNWVDEGDGDVGIIACGLSYAYTKEALENLNLNLPVLKLSSMHPLPERLIENFVSQMKKVIVVEEVDPFVELHVRAMGLAEVYGKMNGYMPMNYEYNVGRVETGIAKALGIKPSRDYEGIVAESQKLAAKAPPRPPVLCPGCPHSASFYAIRRVVDELGDAALPSDIGCYTLGINKPLEGVDITICMGASVGVSNGLAHVLNNKIIATIGDSTFIHAGIPPLINAVYNHADFVLVILDNSTTGMTGHQPHPGTGFRGCGEAGKAVRIEDIVRGCGVEFVEVVNPYNVRKMVDVLRRALNHDGVAVVIARQPCAILWSRARRREGKIVTYKVTEDCTLCMECVNTFACPALIFDGEKVSIDQSLCVGCAVCAKICPNRAIKPAKSN.

Residues cysteine 573, cysteine 576, cysteine 579, cysteine 585, cysteine 602, cysteine 605, cysteine 608, and cysteine 612 each contribute to the [4Fe-4S] cluster site. The 4Fe-4S ferredoxin-type domain occupies 593–622 (EKVSIDQSLCVGCAVCAKICPNRAIKPAKS).

As to quaternary structure, heterodimer of the IorA and IorB subunits. [4Fe-4S] cluster is required as a cofactor.

It carries out the reaction indole-3-pyruvate + 2 oxidized [2Fe-2S]-[ferredoxin] + CoA = (indol-3-yl)acetyl-CoA + 2 reduced [2Fe-2S]-[ferredoxin] + CO2 + H(+). Its function is as follows. Catalyzes the ferredoxin-dependent oxidative decarboxylation of arylpyruvates. This chain is Indolepyruvate oxidoreductase subunit IorA (iorA), found in Archaeoglobus fulgidus (strain ATCC 49558 / DSM 4304 / JCM 9628 / NBRC 100126 / VC-16).